The following is a 405-amino-acid chain: Putative colanic acid biosynthesis glycosyl transferase WcaC (405 aa).

It functions in the pathway slime biogenesis; slime polysaccharide biosynthesis. In Escherichia coli (strain K12), this protein is Putative colanic acid biosynthesis glycosyl transferase WcaC (wcaC).